The sequence spans 253 residues: Adenosylcobinamide-GDP ribazoletransferase (253 aa).

A run of 7 helical transmembrane segments spans residues Ile-33–Leu-53, Ile-56–Asn-76, Ile-106–Leu-126, Phe-132–Ile-152, Val-178–Phe-198, Leu-209–Leu-229, and Glu-233–His-253.

It belongs to the CobS family. Mg(2+) serves as cofactor.

Its subcellular location is the cell membrane. The enzyme catalyses alpha-ribazole + adenosylcob(III)inamide-GDP = adenosylcob(III)alamin + GMP + H(+). It carries out the reaction alpha-ribazole 5'-phosphate + adenosylcob(III)inamide-GDP = adenosylcob(III)alamin 5'-phosphate + GMP + H(+). Its pathway is cofactor biosynthesis; adenosylcobalamin biosynthesis; adenosylcobalamin from cob(II)yrinate a,c-diamide: step 7/7. Joins adenosylcobinamide-GDP and alpha-ribazole to generate adenosylcobalamin (Ado-cobalamin). Also synthesizes adenosylcobalamin 5'-phosphate from adenosylcobinamide-GDP and alpha-ribazole 5'-phosphate. The protein is Adenosylcobinamide-GDP ribazoletransferase of Saccharolobus islandicus (strain M.16.27) (Sulfolobus islandicus).